A 324-amino-acid chain; its full sequence is MEKKYYALAYYYITRVDNPHEEIALHKKFLEDLDVSCRIYISEQGINGQFSGYEPHAELYMQWLKERPNFSKIKFKIHHIKENIFPRITVKYRKELAALGCEVDLSKQAKHISPQEWHEKLQENRCLILDVRNNYEWKIGHFDNATLPDIQTFREFPEYAEKLAQECDPETTPVMMYCTGGIRCELYSPVLLEKGFKEVYQLDGGVIAYGQQVGTGKWLGKLFVFDDRLAIPIDESDPDVAPIAECCHCQTPSDAYYNCANTDCNALFLCCDECIHQHQGCCGEECSQSPRVRKFDSSRGNKPFRRAHLCEISENSESASCCLI.

A Rhodanese domain is found at 122–218 (QENRCLILDV…YGQQVGTGKW (97 aa)). Cys-178 acts as the Cysteine persulfide intermediate in catalysis.

This sequence belongs to the TrhO family.

The catalysed reaction is uridine(34) in tRNA + AH2 + O2 = 5-hydroxyuridine(34) in tRNA + A + H2O. Its function is as follows. Catalyzes oxygen-dependent 5-hydroxyuridine (ho5U) modification at position 34 in tRNAs. The protein is tRNA uridine(34) hydroxylase of Chlamydia pneumoniae (Chlamydophila pneumoniae).